Consider the following 442-residue polypeptide: tRNA modification GTPase MnmE (442 aa).

Arg23, Glu82, and Lys121 together coordinate (6S)-5-formyl-5,6,7,8-tetrahydrofolate. In terms of domain architecture, TrmE-type G spans 217 to 363 (PFKIAIIGET…LVDLLTKYIN (147 aa)). Asn227 lines the K(+) pocket. GTP is bound by residues 227 to 232 (NVGKSS), 246 to 252 (SNIKGST), and 271 to 274 (DTAG). Ser231 serves as a coordination point for Mg(2+). Residues Ser246, Ile248, and Ser251 each contribute to the K(+) site. Position 252 (Thr252) interacts with Mg(2+). Lys442 lines the (6S)-5-formyl-5,6,7,8-tetrahydrofolate pocket.

The protein belongs to the TRAFAC class TrmE-Era-EngA-EngB-Septin-like GTPase superfamily. TrmE GTPase family. Homodimer. Heterotetramer of two MnmE and two MnmG subunits. The cofactor is K(+).

The protein localises to the cytoplasm. Its function is as follows. Exhibits a very high intrinsic GTPase hydrolysis rate. Involved in the addition of a carboxymethylaminomethyl (cmnm) group at the wobble position (U34) of certain tRNAs, forming tRNA-cmnm(5)s(2)U34. This is tRNA modification GTPase MnmE from Mycoplasma genitalium (strain ATCC 33530 / DSM 19775 / NCTC 10195 / G37) (Mycoplasmoides genitalium).